We begin with the raw amino-acid sequence, 180 residues long: Adenine phosphoribosyltransferase (180 aa).

Alanine 2 bears the N-acetylalanine mark. Phosphoserine occurs at positions 4, 15, and 30. Phosphotyrosine is present on tyrosine 60. Phosphoserine is present on serine 66. Lysine 114 carries the N6-acetyllysine modification. Residue threonine 135 is modified to Phosphothreonine.

It belongs to the purine/pyrimidine phosphoribosyltransferase family. As to quaternary structure, homodimer.

Its subcellular location is the cytoplasm. The catalysed reaction is AMP + diphosphate = 5-phospho-alpha-D-ribose 1-diphosphate + adenine. It participates in purine metabolism; AMP biosynthesis via salvage pathway; AMP from adenine: step 1/1. Its function is as follows. Catalyzes a salvage reaction resulting in the formation of AMP, that is energically less costly than de novo synthesis. This chain is Adenine phosphoribosyltransferase, found in Cricetulus griseus (Chinese hamster).